Consider the following 327-residue polypeptide: Sphingomyelinase D (327 aa).

A signal peptide spans 1–23; the sequence is MQPLTRTICALFCLLLTLPLTFG. The active site involves H52. Positions 72, 74, and 117 each coordinate Mg(2+). The SMD-tail motif lies at 320–327; the sequence is VTGADKLW.

It belongs to the sphingomyelinase D/phospholipase D family. Requires Mg(2+) as cofactor.

The protein resides in the secreted. It catalyses the reaction a sphingomyelin + H2O = an N-acylsphing-4-enine 1-phosphate + choline + H(+). Catalyzes the hydrolysis of sphingomyelin. Sphingomyelinases D are produced by some spider in their venoms, but also by arthropods such as ticks, or pathogenic bacteria and fungi. They might play a role in pathogenicity through different mechanisms, such as membrane destabilization and host cell penetration, but also pulmonary inflammation and cutaneous lesions. In Paracoccidioides brasiliensis (strain Pb03), this protein is Sphingomyelinase D.